Reading from the N-terminus, the 293-residue chain is Protease HtpX (293 aa).

The next 2 helical transmembrane spans lie at 4–24 and 34–54; these read IALFLLTNLAVMVVFGLVLSL and GLMIMALLFGFGGSFVSLLMS. His139 contributes to the Zn(2+) binding site. Residue Glu140 is part of the active site. His143 lines the Zn(2+) pocket. The next 2 membrane-spanning stretches (helical) occupy residues 158 to 178 and 193 to 213; these read VVNTFVIFISRILAQLAAGFM and LIYFAVATVLELVFGILASII. Residue Glu222 coordinates Zn(2+).

It belongs to the peptidase M48B family. The cofactor is Zn(2+).

The protein localises to the cell inner membrane. The chain is Protease HtpX from Escherichia coli (strain ATCC 8739 / DSM 1576 / NBRC 3972 / NCIMB 8545 / WDCM 00012 / Crooks).